Consider the following 1209-residue polypeptide: ATP-dependent helicase/nuclease subunit A (1209 aa).

Residues 9–482 (SQWTDEQWQA…IDLAKNFRSR (474 aa)) enclose the UvrD-like helicase ATP-binding domain. 30–37 (AAAGSGKT) contacts ATP. Residues 510–798 (AALRFGAQDY…RMMTIHKSKG (289 aa)) form the UvrD-like helicase C-terminal domain.

It belongs to the helicase family. AddA subfamily. Heterodimer of AddA and AddB/RexB. Mg(2+) serves as cofactor.

The enzyme catalyses Couples ATP hydrolysis with the unwinding of duplex DNA by translocating in the 3'-5' direction.. The catalysed reaction is ATP + H2O = ADP + phosphate + H(+). Functionally, the heterodimer acts as both an ATP-dependent DNA helicase and an ATP-dependent, dual-direction single-stranded exonuclease. Recognizes the chi site generating a DNA molecule suitable for the initiation of homologous recombination. The AddA nuclease domain is required for chi fragment generation; this subunit has the helicase and 3' -&gt; 5' nuclease activities. The polypeptide is ATP-dependent helicase/nuclease subunit A (Anoxybacillus flavithermus (strain DSM 21510 / WK1)).